A 642-amino-acid polypeptide reads, in one-letter code: MIVVFRHESTIGHVFLTGGDYHSGAGGFSRAPSTAVTYVAPWLRTSQFPGGDRGLSGGGQRGRLWAYGPGYVEGIYVPPYQQAYTTELRTTCTCTPSRSRPGQVFTTCRSAIHPCAGPRVDSCVQHAGCVRQTTRGDKRKLNMSDSPKNAQKVTDEADVVLVGAGIMSATLGAMLRQLEPSWSQVIFERLDGAAQESSSPWNNAGTGHSALCELNYTPEKNGKIDISKAVNINEKFQVSRQFWAHQVEEGILPDPKEFINAVPHVSFGHGADQVAYIKNRYNALKDHPLFPGMQYADDEETFTEKLPLMAQGRDFSDPVAISWIQEGTDINYGSQSKQFLKAAEAGGTEIRYGHEVKDITKDGAKWKVTVKNVHTGDTQTIRANFVFVGAGGMALPLLQKSGIAEIRGFGGFPVSGQWLRCTNEELIEQHAAKVYGKASVGAPPMSVPHLDTRVIDGEKGLLFGPYAGWTPKFLKEGSNLDLFSSLRPTNLASLLGVGVQEMGLTKYLITEVVKDMEARMESLREYMPNAKKSDWELITAGQRVQVIKPVGAPRFGSLEFGTTLISNSEGTIAGLLGASPGASIAPAAMIELLERCFGKRMIEWGDKIQEMVPSYGKKLADEPEMFAELWEYTQKTLKLEKA.

Residues 1–142 (MIVVFRHEST…TTRGDKRKLN (142 aa)) form a unknown region. The segment at 143-642 (MSDSPKNAQK…TQKTLKLEKA (500 aa)) is MQO domain.

This sequence in the C-terminal section; belongs to the MQO family. FAD serves as cofactor.

It catalyses the reaction (S)-malate + a quinone = a quinol + oxaloacetate. It participates in carbohydrate metabolism; tricarboxylic acid cycle; oxaloacetate from (S)-malate (quinone route): step 1/1. The polypeptide is Probable malate:quinone oxidoreductase (mqo) (Corynebacterium efficiens (strain DSM 44549 / YS-314 / AJ 12310 / JCM 11189 / NBRC 100395)).